A 232-amino-acid polypeptide reads, in one-letter code: Large ribosomal subunit protein uL1 (232 aa).

The protein belongs to the universal ribosomal protein uL1 family. In terms of assembly, part of the 50S ribosomal subunit.

In terms of biological role, binds directly to 23S rRNA. The L1 stalk is quite mobile in the ribosome, and is involved in E site tRNA release. Its function is as follows. Protein L1 is also a translational repressor protein, it controls the translation of the L11 operon by binding to its mRNA. This Bartonella henselae (strain ATCC 49882 / DSM 28221 / CCUG 30454 / Houston 1) (Rochalimaea henselae) protein is Large ribosomal subunit protein uL1.